The following is a 304-amino-acid chain: Acetyl-coenzyme A carboxylase carboxyl transferase subunit beta (304 aa).

Residues 29 to 298 enclose the CoA carboxyltransferase N-terminal domain; it reads LWSKCESCGA…ASDVSPAAVP (270 aa). Residues Cys-33, Cys-36, Cys-52, and Cys-55 each coordinate Zn(2+). A C4-type zinc finger spans residues 33–55; that stretch reads CESCGALTYTKDLRANQMVCLEC.

This sequence belongs to the AccD/PCCB family. In terms of assembly, acetyl-CoA carboxylase is a heterohexamer composed of biotin carboxyl carrier protein (AccB), biotin carboxylase (AccC) and two subunits each of ACCase subunit alpha (AccA) and ACCase subunit beta (AccD). It depends on Zn(2+) as a cofactor.

The protein resides in the cytoplasm. The catalysed reaction is N(6)-carboxybiotinyl-L-lysyl-[protein] + acetyl-CoA = N(6)-biotinyl-L-lysyl-[protein] + malonyl-CoA. The protein operates within lipid metabolism; malonyl-CoA biosynthesis; malonyl-CoA from acetyl-CoA: step 1/1. Component of the acetyl coenzyme A carboxylase (ACC) complex. Biotin carboxylase (BC) catalyzes the carboxylation of biotin on its carrier protein (BCCP) and then the CO(2) group is transferred by the transcarboxylase to acetyl-CoA to form malonyl-CoA. The protein is Acetyl-coenzyme A carboxylase carboxyl transferase subunit beta of Acaryochloris marina (strain MBIC 11017).